Reading from the N-terminus, the 176-residue chain is RNA pyrophosphohydrolase (176 aa).

Positions 6–149 (GYRPNVGIVI…KRDVYRRVMK (144 aa)) constitute a Nudix hydrolase domain. The short motif at 38–59 (GGINPGESAEQAMYRELFEEVG) is the Nudix box element.

Belongs to the Nudix hydrolase family. RppH subfamily. The cofactor is a divalent metal cation.

Its function is as follows. Accelerates the degradation of transcripts by removing pyrophosphate from the 5'-end of triphosphorylated RNA, leading to a more labile monophosphorylated state that can stimulate subsequent ribonuclease cleavage. The polypeptide is RNA pyrophosphohydrolase (Shigella boydii serotype 4 (strain Sb227)).